Consider the following 493-residue polypeptide: Probable GTP-binding protein OBGM, mitochondrial (493 aa).

The N-terminal 28 residues, 1–28 (MWLIRAIVPVRYLGSYKRPQKPPWMRNP), are a transit peptide targeting the mitochondrion. Residues 48–303 (TRMRDRFTLY…AVLILELKSI (256 aa)) form the Obg domain. 2 disordered regions span residues 65–89 (SGCSSVRRSRADRYGKPDGGNGGRG) and 146–215 (GEIP…EDDD). Residues 187–196 (SESDQDDTEQ) are compositionally biased toward acidic residues. The 173-residue stretch at 304–476 (ADVGLVGMPN…LKDGLKMLVD (173 aa)) folds into the OBG-type G domain. GTP contacts are provided by residues 310–317 (GMPNAGKS) and 356–360 (DIPGL).

Belongs to the TRAFAC class OBG-HflX-like GTPase superfamily. OBG GTPase family.

It is found in the mitochondrion. Its function is as follows. May bind GTP and have GTPase activity. The chain is Probable GTP-binding protein OBGM, mitochondrial (ATOBGM) from Arabidopsis thaliana (Mouse-ear cress).